Here is a 400-residue protein sequence, read N- to C-terminus: Cytohesin-3 (400 aa).

The stretch at 14 to 61 (EDLSLEEREELLDIRRRKKELIDDIERLKYEIAEVMTEIDNLTSVEES) forms a coiled coil. Positions 77–206 (FNMDPKKGIQ…IIMLNTSLHN (130 aa)) constitute an SEC7 domain. One can recognise a PH domain in the interval 265-381 (PDREGWLLKL…WMKSIKASIS (117 aa)). A 1,2-diacyl-sn-glycero-3-phospho-(1D-myo-inositol-3,4,5-trisphosphate) is bound by residues 273–281 (KLGGGRVKT), Arg285, Tyr296, Arg306, and Asn355. The segment at 392 to 400 (RKRRIANKK) is C-terminal autoinhibitory region.

In terms of assembly, interacts with TAMALIN. As to expression, present in all tissues tested, with highest protein levels in brain and adrenal.

It is found in the cytoplasm. Its subcellular location is the cytosol. It localises to the cell membrane. Promotes guanine-nucleotide exchange on ARF1. Promotes the activation of ARF factors through replacement of GDP with GTP. The polypeptide is Cytohesin-3 (Cyth3) (Rattus norvegicus (Rat)).